An 826-amino-acid chain; its full sequence is Lon protease (826 aa).

Positions 1–20 (MSEEELNNRDTESKQEHDEN) are enriched in basic and acidic residues. Residues 1–27 (MSEEELNNRDTESKQEHDENNSNFEAG) form a disordered region. A Lon N-terminal domain is found at 33–231 (LPVLPLREVI…KVHALLEKEL (199 aa)). 384–391 (GPPGVGKT) is a binding site for ATP. The Lon proteolytic domain occupies 620–801 (ENLVGMTTGL…SEALTFTLAE (182 aa)). Active-site residues include Ser707 and Lys750.

Belongs to the peptidase S16 family. As to quaternary structure, homohexamer. Organized in a ring with a central cavity.

The protein resides in the cytoplasm. The enzyme catalyses Hydrolysis of proteins in presence of ATP.. ATP-dependent serine protease that mediates the selective degradation of mutant and abnormal proteins as well as certain short-lived regulatory proteins. Required for cellular homeostasis and for survival from DNA damage and developmental changes induced by stress. Degrades polypeptides processively to yield small peptide fragments that are 5 to 10 amino acids long. Binds to DNA in a double-stranded, site-specific manner. The chain is Lon protease from Neorickettsia sennetsu (strain ATCC VR-367 / Miyayama) (Ehrlichia sennetsu).